A 218-amino-acid chain; its full sequence is Thiopurine S-methyltransferase (218 aa).

Residues W10, L45, E66, and R123 each coordinate S-adenosyl-L-methionine.

It belongs to the class I-like SAM-binding methyltransferase superfamily. TPMT family.

The protein resides in the cytoplasm. It carries out the reaction S-adenosyl-L-methionine + a thiopurine = S-adenosyl-L-homocysteine + a thiopurine S-methylether.. The polypeptide is Thiopurine S-methyltransferase (Shewanella amazonensis (strain ATCC BAA-1098 / SB2B)).